A 150-amino-acid chain; its full sequence is UPF0178 protein Bcen2424_1660 (150 aa).

It belongs to the UPF0178 family.

The chain is UPF0178 protein Bcen2424_1660 from Burkholderia cenocepacia (strain HI2424).